Reading from the N-terminus, the 339-residue chain is Putative pectinesterase 10 (339 aa).

The signal sequence occupies residues 1-28 (MKGVTIHNFCYSYFKVCLLVMSLAYGSA). Asparagine 112 carries N-linked (GlcNAc...) asparagine glycosylation. Residue threonine 116 participates in substrate binding. Aspartate 169 (proton donor) is an active-site residue. The active-site Nucleophile is the aspartate 190. 2 residues coordinate substrate: arginine 252 and tryptophan 254. Asparagine 322 carries an N-linked (GlcNAc...) asparagine glycan.

It belongs to the pectinesterase family. As to expression, expressed in siliques.

It is found in the secreted. It localises to the cell wall. The enzyme catalyses [(1-&gt;4)-alpha-D-galacturonosyl methyl ester](n) + n H2O = [(1-&gt;4)-alpha-D-galacturonosyl](n) + n methanol + n H(+). Its pathway is glycan metabolism; pectin degradation; 2-dehydro-3-deoxy-D-gluconate from pectin: step 1/5. Functionally, acts in the modification of cell walls via demethylesterification of cell wall pectin. This chain is Putative pectinesterase 10 (PME10), found in Arabidopsis thaliana (Mouse-ear cress).